The chain runs to 155 residues: Small ribosomal subunit protein uS7c (155 aa).

The protein belongs to the universal ribosomal protein uS7 family. In terms of assembly, part of the 30S ribosomal subunit.

The protein resides in the plastid. The protein localises to the chloroplast. One of the primary rRNA binding proteins, it binds directly to 16S rRNA where it nucleates assembly of the head domain of the 30S subunit. The protein is Small ribosomal subunit protein uS7c (rps7) of Butomus umbellatus (Flowering rush).